A 218-amino-acid polypeptide reads, in one-letter code: Mediator of RNA polymerase II transcription subunit 20 (218 aa).

Belongs to the Mediator complex subunit 20 family. In terms of assembly, component of the Mediator complex.

It is found in the nucleus. Component of the Mediator complex, a coactivator involved in the regulated transcription of nearly all RNA polymerase II-dependent genes. Mediator functions as a bridge to convey information from gene-specific regulatory proteins to the basal RNA polymerase II transcription machinery. Mediator is recruited to promoters by direct interactions with regulatory proteins and serves as a scaffold for the assembly of a functional preinitiation complex with RNA polymerase II and the general transcription factors. The protein is Mediator of RNA polymerase II transcription subunit 20 (SRB2) of Yarrowia lipolytica (strain CLIB 122 / E 150) (Yeast).